The chain runs to 1881 residues: Endoribonuclease Dicer-S (1881 aa).

The Helicase ATP-binding domain occupies 41–217 (LLEAALDHNI…DLEEKIQNLE (177 aa)). Residue 54–61 (LNSGSGKT) participates in ATP binding. The DECH box signature appears at 165-168 (DECH). The Helicase C-terminal domain maps to 425 to 594 (SFPSPFTNIL…SMDCGNTESE (170 aa)). A Dicer dsRNA-binding fold domain is found at 622 to 714 (AIGHINRYCA…MPVGKETVKY (93 aa)). Positions 887–1034 (KFVEDIEKSE…LVPELCAIHP (148 aa)) constitute a PAZ domain. RNase III domains follow at residues 1249–1380 (TSDI…ETSG) and 1625–1783 (FENF…MDSG). Mg(2+)-binding residues include Glu-1293, Asp-1371, Glu-1374, Glu-1664, Asp-1769, and Glu-1772. Positions 1808–1873 (VPRSPVRELL…ARRALRSLKA (66 aa)) constitute a DRBM domain.

Belongs to the helicase family. Dicer subfamily. As to quaternary structure, component of the RISC loading complex (RLC), or micro-RNA (miRNA) loading complex (miRLC), which is composed of dicer1, ago2 and tarbp2; dicer1 and tarbp2 are required to process precursor miRNAs (pre-miRNAs) to mature miRNAs and then load them onto ago2. Note that the trimeric RLC/miRLC is also referred to as RISC. It depends on Mg(2+) as a cofactor. The cofactor is Mn(2+).

It localises to the cytoplasm. It carries out the reaction Endonucleolytic cleavage to 5'-phosphomonoester.. Its function is as follows. Double-stranded RNA (dsRNA) endoribonuclease playing a central role in short dsRNA-mediated post-transcriptional gene silencing. Cleaves naturally occurring long dsRNAs and short hairpin pre-microRNAs (miRNA) into fragments of twenty-one to twenty-three nucleotides with 3' overhang of two nucleotides, producing respectively short interfering RNAs (siRNA) and mature microRNAs. SiRNAs and miRNAs serve as guide to direct the RNA-induced silencing complex (RISC) to complementary RNAs to degrade them or prevent their translation. Gene silencing mediated by siRNAs, also called RNA interference, controls the elimination of transcripts from mobile and repetitive DNA elements of the genome but also the degradation of exogenous RNA of viral origin for instance. The miRNA pathway on the other side is a mean to specifically regulate the expression of target genes. During embryonic development, at the left-right organizer, post-transcriptionally regulates the expression of dand5 in flow sensor cells. In post-flow stages, acts along with Bicc1 to repress dand5 mRNA translation and decay. Decreased Dand5 expression lifts repression of Nodal and defines leftness by induction of the lateral plate mesoderm Nodal signaling cascade. The chain is Endoribonuclease Dicer-S (dicer1.S) from Xenopus laevis (African clawed frog).